A 614-amino-acid chain; its full sequence is Maltose permease MAL61 (614 aa).

Residues 1–48 (MKGLSSLINRKKDRNDSHLDEIENGVNATEFNSIEMEEQGKKSDFDLS) are disordered. Residues 1 to 108 (MKGLSSLINR…AAAWSLLVST (108 aa)) lie on the Cytoplasmic side of the membrane. Residues 38–48 (EQGKKSDFDLS) show a composition bias toward basic and acidic residues. Residues 109-129 (TLIQEGYDTAILGAFYALPVF) form a helical membrane-spanning segment. The Extracellular segment spans residues 130–144 (QKKYGSLNSNTGDYE). The helical transmembrane segment at 145-165 (ISVSWQIGLCLCYMAGEIVGL) threads the bilayer. Over 166–180 (QVTGPSVDYMGNRYT) the chain is Cytoplasmic. The helical transmembrane segment at 181–201 (LIMALFFLAAFIFILYFCKSL) threads the bilayer. Residue glycine 202 is a topological domain, extracellular. The chain crosses the membrane as a helical span at residues 203 to 223 (MIAVGQALCGMPWGCFQCLTV). Residues 224–236 (SYASEICPLALRY) lie on the Cytoplasmic side of the membrane. The helical transmembrane segment at 237–257 (YLTTYSNLCWTFGQLFAAGIM) threads the bilayer. Topologically, residues 258 to 272 (KNSQNKYANSELGYK) are extracellular. The chain crosses the membrane as a helical span at residues 273–293 (LPFALQWIWPLPLAVGIFLAP). The Cytoplasmic portion of the chain corresponds to 294–364 (ESPWWLVKKG…KDGINRRRTR (71 aa)). The helical transmembrane segment at 365 to 385 (IACLCWIGQCSCGASLIGYST) threads the bilayer. At 386–398 (YFYEKAGVSTDTA) the chain is on the extracellular side. Residues 399-419 (FTFSIIQYCLGIAATFVSWWA) form a helical membrane-spanning segment. Topologically, residues 420 to 427 (SKYCGRFD) are cytoplasmic. The chain crosses the membrane as a helical span at residues 428 to 448 (LYAFGLAFQAIMFFIIGGLGC). At 449–460 (SDTHGAKMGSGA) the chain is on the extracellular side. A helical membrane pass occupies residues 461–481 (LLMVVAFFYNLGIAPVVFCLV). The Cytoplasmic portion of the chain corresponds to 482–493 (SEMPSSRLRTKT). A helical transmembrane segment spans residues 494–514 (IILARNAYNVIQVVVTVLIMY). Topologically, residues 515–526 (QLNSEKWNWGAK) are extracellular. A helical transmembrane segment spans residues 527-547 (SGFFWGGFCLATLAWAVVDLP). Over 548 to 614 (ETAGRTFIEI…GRSTPSVVNK (67 aa)) the chain is Cytoplasmic. Residues 594-614 (KEDLETSVVDEGRSTPSVVNK) form a disordered region.

Belongs to the major facilitator superfamily. Sugar transporter (TC 2.A.1.1) family.

It localises to the membrane. Transporter for maltose. In Saccharomyces cerevisiae (Baker's yeast), this protein is Maltose permease MAL61 (MAL61).